The primary structure comprises 123 residues: uncharacterized protein (123 aa).

The disordered stretch occupies residues 1-28 (MGLGSSKRKEEPPHKSEPKTVGRVKRAG). Positions 7–20 (KRKEEPPHKSEPKT) are enriched in basic and acidic residues.

The protein belongs to the TUSC2 family.

This is an uncharacterized protein from Caenorhabditis elegans.